We begin with the raw amino-acid sequence, 1413 residues long: DNA-directed RNA polymerase subunit beta' (1413 aa).

Zn(2+) is bound by residues Cys-70, Cys-72, Cys-85, and Cys-88. Mg(2+)-binding residues include Asp-460, Asp-462, and Asp-464. 4 residues coordinate Zn(2+): Cys-819, Cys-893, Cys-900, and Cys-903. Residues 1393 to 1413 are disordered; the sequence is EAFEFGTPETPAAEQTPHTNE.

This sequence belongs to the RNA polymerase beta' chain family. In terms of assembly, the RNAP catalytic core consists of 2 alpha, 1 beta, 1 beta' and 1 omega subunit. When a sigma factor is associated with the core the holoenzyme is formed, which can initiate transcription. Mg(2+) is required as a cofactor. The cofactor is Zn(2+).

It catalyses the reaction RNA(n) + a ribonucleoside 5'-triphosphate = RNA(n+1) + diphosphate. DNA-dependent RNA polymerase catalyzes the transcription of DNA into RNA using the four ribonucleoside triphosphates as substrates. This chain is DNA-directed RNA polymerase subunit beta', found in Paraburkholderia phymatum (strain DSM 17167 / CIP 108236 / LMG 21445 / STM815) (Burkholderia phymatum).